A 274-amino-acid polypeptide reads, in one-letter code: Exosome complex component RRP40 (274 aa).

At alanine 2 the chain carries N-acetylalanine. A Glycyl lysine isopeptide (Lys-Gly) (interchain with G-Cter in SUMO2) cross-link involves residue lysine 150.

This sequence belongs to the RRP40 family. Component of the RNA exosome core complex (Exo-9), composed of EXOSC1, EXOSC2, EXOSC3, EXOSC4, EXOSC5, EXOSC6, EXOSC7, EXOSC8 and EXOSC9; within the complex interacts with EXOSC5 and EXOSC9. The catalytically inactive RNA exosome core complex (Exo-9) associates with the catalytic subunit EXOSC10/RRP6. Exo-9 may associate with DIS3 to form the nucleolar exosome complex, or DIS3L to form the cytoplasmic exosome complex. Exo-9 is formed by a hexameric base ring consisting of the heterodimers EXOSC4-EXOSC9, EXOSC5-EXOSC8 and EXOSC6-EXOSC7, and a cap ring consisting of EXOSC1, EXOSC2 and EXOSC3. The RNA exosome complex associates with cofactors C1D/RRP47, MPHOSPH6/MPP6 and MTREX/MTR4. Interacts with MPHOSPH6/MPP6; the interaction is direct. Interacts with GTPBP1. Interacts with ZC3HAV1. Interacts with DDX17 only in the presence of ZC3HAV1 in an RNA-independent manner. Interacts with DHX36; this interaction occurs in a RNase-insensitive manner. Interacts with HBS1L isoform 2.

It localises to the cytoplasm. The protein localises to the nucleus. Its subcellular location is the nucleolus. In terms of biological role, non-catalytic component of the RNA exosome complex which has 3'-&gt;5' exoribonuclease activity and participates in a multitude of cellular RNA processing and degradation events. In the nucleus, the RNA exosome complex is involved in proper maturation of stable RNA species such as rRNA, snRNA and snoRNA, in the elimination of RNA processing by-products and non-coding 'pervasive' transcripts, such as antisense RNA species and promoter-upstream transcripts (PROMPTs), and of mRNAs with processing defects, thereby limiting or excluding their export to the cytoplasm. The RNA exosome may be involved in Ig class switch recombination (CSR) and/or Ig variable region somatic hypermutation (SHM) by targeting AICDA deamination activity to transcribed dsDNA substrates. In the cytoplasm, the RNA exosome complex is involved in general mRNA turnover and specifically degrades inherently unstable mRNAs containing AU-rich elements (AREs) within their 3' untranslated regions, and in RNA surveillance pathways, preventing translation of aberrant mRNAs. It seems to be involved in degradation of histone mRNA. The catalytic inactive RNA exosome core complex of 9 subunits (Exo-9) is proposed to play a pivotal role in the binding and presentation of RNA for ribonucleolysis, and to serve as a scaffold for the association with catalytic subunits and accessory proteins or complexes. EXOSC3 as peripheral part of the Exo-9 complex stabilizes the hexameric ring of RNase PH-domain subunits through contacts with EXOSC9 and EXOSC5. This chain is Exosome complex component RRP40 (Exosc3), found in Mus musculus (Mouse).